We begin with the raw amino-acid sequence, 577 residues long: Aspartate--tRNA ligase (577 aa).

Glutamate 171 serves as a coordination point for L-aspartate. The aspartate stretch occupies residues 195–198 (QLFK). L-aspartate is bound at residue arginine 217. Residues 217–219 (RDE) and glutamine 226 each bind ATP. Histidine 437 provides a ligand contact to L-aspartate. Glutamate 472 provides a ligand contact to ATP. Arginine 479 provides a ligand contact to L-aspartate. Residue 524–527 (GFDR) participates in ATP binding.

It belongs to the class-II aminoacyl-tRNA synthetase family. Type 1 subfamily. Homodimer.

The protein localises to the cytoplasm. It catalyses the reaction tRNA(Asp) + L-aspartate + ATP = L-aspartyl-tRNA(Asp) + AMP + diphosphate. Its function is as follows. Catalyzes the attachment of L-aspartate to tRNA(Asp) in a two-step reaction: L-aspartate is first activated by ATP to form Asp-AMP and then transferred to the acceptor end of tRNA(Asp). This Deinococcus geothermalis (strain DSM 11300 / CIP 105573 / AG-3a) protein is Aspartate--tRNA ligase.